Reading from the N-terminus, the 374-residue chain is Chaperone protein DnaJ (374 aa).

The J domain maps to 6–71 (DYYAVLEVTR…QKRAAYDRFG (66 aa)). A CR-type zinc finger spans residues 130–209 (GVKKPITVPT…CHGAGTVERE (80 aa)). Zn(2+)-binding residues include C143, C146, C161, C164, C183, C186, C197, and C200. CXXCXGXG motif repeat units lie at residues 143–150 (CESCEGTG), 161–168 (CPTCHGAG), 183–190 (CPTCHGAG), and 197–204 (CAACHGAG).

The protein belongs to the DnaJ family. As to quaternary structure, homodimer. It depends on Zn(2+) as a cofactor.

It localises to the cytoplasm. In terms of biological role, participates actively in the response to hyperosmotic and heat shock by preventing the aggregation of stress-denatured proteins and by disaggregating proteins, also in an autonomous, DnaK-independent fashion. Unfolded proteins bind initially to DnaJ; upon interaction with the DnaJ-bound protein, DnaK hydrolyzes its bound ATP, resulting in the formation of a stable complex. GrpE releases ADP from DnaK; ATP binding to DnaK triggers the release of the substrate protein, thus completing the reaction cycle. Several rounds of ATP-dependent interactions between DnaJ, DnaK and GrpE are required for fully efficient folding. Also involved, together with DnaK and GrpE, in the DNA replication of plasmids through activation of initiation proteins. The chain is Chaperone protein DnaJ from Gluconacetobacter diazotrophicus (strain ATCC 49037 / DSM 5601 / CCUG 37298 / CIP 103539 / LMG 7603 / PAl5).